Reading from the N-terminus, the 116-residue chain is MKTIIVFLSLLVLATKFGDANEGVNQEQMKEVIQNEFREDFLNEMAPMSLLQQLEAIESTLLEKEADRNSRQKRCNGENVPCGPNHSTCCSGLSCEETFGYGWWYDTPFCVKPSKG.

The N-terminal stretch at 1-20 is a signal peptide; sequence MKTIIVFLSLLVLATKFGDA. A propeptide spanning residues 21–74 is cleaved from the precursor; it reads NEGVNQEQMKEVIQNEFREDFLNEMAPMSLLQQLEAIESTLLEKEADRNSRQKR. Cystine bridges form between Cys75-Cys90, Cys82-Cys95, and Cys89-Cys110. A glycan (N-linked (GlcNAc...) asparagine) is linked at Asn85.

Belongs to the neurotoxin 14 (magi-1) family. 06 (ICK-Trit) subfamily. Expressed by the venom gland.

It is found in the secreted. Its function is as follows. Ion channel inhibitor. This Trittame loki (Brush-footed trapdoor spider) protein is U16-barytoxin-Tl1f.